The chain runs to 196 residues: GTP cyclohydrolase-2 (196 aa).

49–53 (RVHSE) contacts GTP. The Zn(2+) site is built by Cys54, Cys65, and Cys67. Residues Gln70, 92-94 (EGR), and Thr114 contribute to the GTP site. Asp126 acts as the Proton acceptor in catalysis. Arg128 acts as the Nucleophile in catalysis. The GTP site is built by Thr149 and Lys154.

This sequence belongs to the GTP cyclohydrolase II family. In terms of assembly, homodimer. Zn(2+) is required as a cofactor.

The catalysed reaction is GTP + 4 H2O = 2,5-diamino-6-hydroxy-4-(5-phosphoribosylamino)-pyrimidine + formate + 2 phosphate + 3 H(+). Its pathway is cofactor biosynthesis; riboflavin biosynthesis; 5-amino-6-(D-ribitylamino)uracil from GTP: step 1/4. Its function is as follows. Catalyzes the conversion of GTP to 2,5-diamino-6-ribosylamino-4(3H)-pyrimidinone 5'-phosphate (DARP), formate and pyrophosphate. The polypeptide is GTP cyclohydrolase-2 (Citrobacter koseri (strain ATCC BAA-895 / CDC 4225-83 / SGSC4696)).